We begin with the raw amino-acid sequence, 335 residues long: Probable cytosolic iron-sulfur protein assembly protein Ciao1 (335 aa).

WD repeat units lie at residues 12-51 (GHKG…WTTK), 57-96 (GHKR…FECN), 101-140 (GHEN…EFEC), 146-185 (PHTQ…SDWD), 192-231 (SHTS…NDAG), 250-289 (QHSR…KRDE), and 301-335 (AHDQ…KMTE).

Belongs to the WD repeat CIA1 family.

Functionally, essential component of the cytosolic iron-sulfur (Fe/S) protein assembly machinery. Required for the maturation of extramitochondrial Fe/S proteins. The chain is Probable cytosolic iron-sulfur protein assembly protein Ciao1 from Drosophila ananassae (Fruit fly).